The chain runs to 308 residues: Glucan 1,3-beta-glucosidase BGL2 (308 aa).

An N-terminal signal peptide occupies residues 1–18 (MQIKFLTTLATVLTSVAA). Catalysis depends on Glu-119, which acts as the Proton donor. N-linked (GlcNAc...) asparagine glycosylation is present at Asn-197. Glu-228 functions as the Nucleophile in the catalytic mechanism.

The protein belongs to the glycosyl hydrolase 17 family.

The protein resides in the secreted. Its subcellular location is the cell wall. It localises to the cytoplasm. It carries out the reaction Successive hydrolysis of beta-D-glucose units from the non-reducing ends of (1-&gt;3)-beta-D-glucans, releasing alpha-glucose.. Cell wall glucan 1,3-beta-glucosidase involved in cell wall biosynthesis and virulence. Crucial for delivery of beta-1,3-glucan to the biofilm matrix and for accumulation of mature matrix biomass. Plays a role as a major antigen in human systemic candidiasis patients. The chain is Glucan 1,3-beta-glucosidase BGL2 (BGL2) from Candida albicans (strain SC5314 / ATCC MYA-2876) (Yeast).